A 57-amino-acid chain; its full sequence is Small ribosomal subunit protein bS21 (57 aa).

The interval 22 to 57 is disordered; it reads QCSKSGVLSEAKKRKHYEKPSEKRKRKATEKRNSRK. A compositionally biased stretch (basic residues) spans 33–57; sequence KKRKHYEKPSEKRKRKATEKRNSRK.

Belongs to the bacterial ribosomal protein bS21 family.

This Natranaerobius thermophilus (strain ATCC BAA-1301 / DSM 18059 / JW/NM-WN-LF) protein is Small ribosomal subunit protein bS21.